The following is a 126-amino-acid chain: Fluoride-specific ion channel FluC 1 (126 aa).

Transmembrane regions (helical) follow at residues 37–57 (HWGTLLVNVISSFALGLVLAL), 67–87 (IALLMGVGFFGTLSTFSTFVV), and 98–118 (LLAAAALAVISIVAGLIAAAA). Na(+) is bound by residues Gly77 and Ser80.

This sequence belongs to the fluoride channel Fluc/FEX (TC 1.A.43) family.

It localises to the cell inner membrane. It catalyses the reaction fluoride(in) = fluoride(out). Na(+) is not transported, but it plays an essential structural role and its presence is essential for fluoride channel function. Fluoride-specific ion channel. Important for reducing fluoride concentration in the cell, thus reducing its toxicity. This chain is Fluoride-specific ion channel FluC 1, found in Parasynechococcus marenigrum (strain WH8102).